A 102-amino-acid chain; its full sequence is NADH-quinone oxidoreductase subunit K (102 aa).

Helical transmembrane passes span 6–26 (MHHG…GILV), 30–50 (LIFI…AFVV), and 64–84 (FIFI…LLLL).

The protein belongs to the complex I subunit 4L family. NDH-1 is composed of 14 different subunits. Subunits NuoA, H, J, K, L, M, N constitute the membrane sector of the complex.

It localises to the cell inner membrane. It carries out the reaction a quinone + NADH + 5 H(+)(in) = a quinol + NAD(+) + 4 H(+)(out). Functionally, NDH-1 shuttles electrons from NADH, via FMN and iron-sulfur (Fe-S) centers, to quinones in the respiratory chain. The immediate electron acceptor for the enzyme in this species is believed to be ubiquinone. Couples the redox reaction to proton translocation (for every two electrons transferred, four hydrogen ions are translocated across the cytoplasmic membrane), and thus conserves the redox energy in a proton gradient. In Nitrosospira multiformis (strain ATCC 25196 / NCIMB 11849 / C 71), this protein is NADH-quinone oxidoreductase subunit K.